Here is a 292-residue protein sequence, read N- to C-terminus: Homoserine kinase (292 aa).

84–94 (PFSRGLGSSSA) provides a ligand contact to ATP.

Belongs to the GHMP kinase family. Homoserine kinase subfamily.

It localises to the cytoplasm. It carries out the reaction L-homoserine + ATP = O-phospho-L-homoserine + ADP + H(+). The protein operates within amino-acid biosynthesis; L-threonine biosynthesis; L-threonine from L-aspartate: step 4/5. Catalyzes the ATP-dependent phosphorylation of L-homoserine to L-homoserine phosphate. This Campylobacter hominis (strain ATCC BAA-381 / DSM 21671 / CCUG 45161 / LMG 19568 / NCTC 13146 / CH001A) protein is Homoserine kinase.